We begin with the raw amino-acid sequence, 416 residues long: Probable endo-beta-1,4-glucanase celB (416 aa).

Positions 1–17 (MIWTLAPFVALLPLVTA) are cleaved as a signal peptide. N-linked (GlcNAc...) asparagine glycosylation is found at Asn45, Asn104, Asn117, and Asn135. Residue Glu214 is the Nucleophile of the active site. Glu219 serves as the catalytic Proton donor. Residues Asn233, Asn278, Asn292, and Asn382 are each glycosylated (N-linked (GlcNAc...) asparagine).

Belongs to the glycosyl hydrolase 7 (cellulase C) family.

Its subcellular location is the secreted. The catalysed reaction is Endohydrolysis of (1-&gt;4)-beta-D-glucosidic linkages in cellulose, lichenin and cereal beta-D-glucans.. Functionally, has endoglucanase activity on substrates containing beta-1,4 glycosidic bonds, like in carboxymethylcellulose (CMC), hydroxyethylcellulose (HEC) and beta-glucan. Involved in the degradation of complex natural cellulosic substrates. In Aspergillus flavus (strain ATCC 200026 / FGSC A1120 / IAM 13836 / NRRL 3357 / JCM 12722 / SRRC 167), this protein is Probable endo-beta-1,4-glucanase celB (celB).